We begin with the raw amino-acid sequence, 373 residues long: Pectin lyase D (373 aa).

The N-terminal stretch at 1-19 is a signal peptide; it reads MKYAAALTAIAALAARAAA. Disulfide bonds link cysteine 82–cysteine 101 and cysteine 91–cysteine 225. Asparagine 128 carries an N-linked (GlcNAc...) asparagine glycan. Residue arginine 255 is part of the active site. Asparagine 274 is a glycosylation site (N-linked (GlcNAc...) asparagine). A disulfide bridge links cysteine 321 with cysteine 329. Residue asparagine 348 is glycosylated (N-linked (GlcNAc...) asparagine). The segment covering 354-366 has biased composition (low complexity); it reads LPSADAASTSPAS. The interval 354 to 373 is disordered; that stretch reads LPSADAASTSPASNAGQGNL.

This sequence belongs to the polysaccharide lyase 1 family. Post-translationally, may be O-glycosylated; does not contain N-acetylglucosamine.

It is found in the secreted. It catalyses the reaction Eliminative cleavage of (1-&gt;4)-alpha-D-galacturonan methyl ester to give oligosaccharides with 4-deoxy-6-O-methyl-alpha-D-galact-4-enuronosyl groups at their non-reducing ends.. Pectinolytic enzymes consist of four classes of enzymes: pectin lyase, polygalacturonase, pectin methylesterase and rhamnogalacturonase. Among pectinolytic enzymes, pectin lyase is the most important in depolymerization of pectin, since it cleaves internal glycosidic bonds of highly methylated pectins. This is Pectin lyase D (pelD) from Aspergillus niger.